The following is a 374-amino-acid chain: Eukaryotic translation initiation factor 3 subunit M (374 aa).

A PCI domain is found at 180–339 (TAAKVMVELL…RKVVVSHSTH (160 aa)).

Belongs to the eIF-3 subunit M family. As to quaternary structure, component of the eukaryotic translation initiation factor 3 (eIF-3) complex, which is composed of 13 subunits: EIF3A, EIF3B, EIF3C, EIF3D, EIF3E, EIF3F, EIF3G, EIF3H, EIF3I, EIF3J, EIF3K, EIF3L and EIF3M.

It is found in the cytoplasm. Its function is as follows. Component of the eukaryotic translation initiation factor 3 (eIF-3) complex, which is involved in protein synthesis of a specialized repertoire of mRNAs and, together with other initiation factors, stimulates binding of mRNA and methionyl-tRNAi to the 40S ribosome. The eIF-3 complex specifically targets and initiates translation of a subset of mRNAs involved in cell proliferation. The sequence is that of Eukaryotic translation initiation factor 3 subunit M from Gallus gallus (Chicken).